We begin with the raw amino-acid sequence, 587 residues long: A-type ATP synthase subunit A (587 aa).

Residue 234 to 241 coordinates ATP; it reads GPFGSGKT.

Belongs to the ATPase alpha/beta chains family. As to quaternary structure, the N-terminus (approximately residues 106-122) interacts with subunit H. Has multiple subunits with at least A(3), B(3), C, D, E(1 or 2), F, H(2), I and proteolipid K(x).

The protein localises to the cell membrane. It carries out the reaction ATP + H2O + 4 H(+)(in) = ADP + phosphate + 5 H(+)(out). Its activity is regulated as follows. ATP hydrolysis is inhibited by N',N'-dicyclohexylcarbodiimide. Component of the A-type ATP synthase that produces ATP from ADP in the presence of a proton gradient across the membrane. The A chain is the catalytic subunit. Hydrolyzes ATP, GTP (86% of ATPase rate) and UTP (54% of ATPase rate), has very poor activity on CTP. This Methanocaldococcus jannaschii (strain ATCC 43067 / DSM 2661 / JAL-1 / JCM 10045 / NBRC 100440) (Methanococcus jannaschii) protein is A-type ATP synthase subunit A.